Here is a 436-residue protein sequence, read N- to C-terminus: Probable sodium/metabolite cotransporter BASS4, chloroplastic (436 aa).

The transit peptide at 1-47 (MAIASTLASTQNPFLCLRQPPSPGNRSVVFRRCQDPCGRRWISRSIR) directs the protein to the chloroplast. The next 9 membrane-spanning stretches (helical) occupy residues 109–129 (FLPL…TLGC), 131–151 (ADKY…SGLT), 157–177 (IGAA…ILLL), 195–215 (LVTG…GVAL), 225–245 (LALA…PFWV), 257–277 (FPTD…LIIG), 297–314 (LFSK…WIQV), 328–348 (VFLA…AFNA), and 403–423 (PCVA…NLWL).

The protein belongs to the bile acid:sodium symporter (BASS) (TC 2.A.28) family.

The protein resides in the membrane. It is found in the plastid. Its subcellular location is the chloroplast envelope. Its function is as follows. May function as sodium-coupled metabolite transporter across the chloroplast envelope. The sequence is that of Probable sodium/metabolite cotransporter BASS4, chloroplastic (BASS4) from Arabidopsis thaliana (Mouse-ear cress).